We begin with the raw amino-acid sequence, 318 residues long: Ubiquitin-like domain-containing CTD phosphatase 1 (318 aa).

Residues 3-81 (LPIIVKWGGQ…IMMMGTREES (79 aa)) enclose the Ubiquitin-like domain. Lys117 bears the N6-acetyllysine mark. In terms of domain architecture, FCP1 homology spans 133-294 (PREGKKLLVL…VKLTQYLKEI (162 aa)). Mg(2+)-binding residues include Asp143, Asp145, and Asp253.

The cofactor is Mg(2+).

The protein localises to the nucleus. It carries out the reaction O-phospho-L-seryl-[protein] + H2O = L-seryl-[protein] + phosphate. The enzyme catalyses O-phospho-L-threonyl-[protein] + H2O = L-threonyl-[protein] + phosphate. Functionally, dephosphorylates 26S nuclear proteasomes, thereby decreasing their proteolytic activity. Recruited to the 19S regulatory particle of the 26S proteasome through its interaction with 19S component PSMD2/RPN1. Once recruited, dephosphorylates 19S component PSMC2/RPT1 which impairs PSMC2 ATPase activity and disrupts 26S proteasome assembly. Has also been reported to stimulate the proteolytic activity of the 26S proteasome. This Rattus norvegicus (Rat) protein is Ubiquitin-like domain-containing CTD phosphatase 1 (Ublcp1).